Here is a 209-residue protein sequence, read N- to C-terminus: NAD-reducing hydrogenase HoxS subunit delta (209 aa).

Tetramer of an alpha and a gamma subunits (flavin-containing dimer), and a delta and a nickel-containing beta subunits (hydrogenase dimer). It depends on [4Fe-4S] cluster as a cofactor. Requires [3Fe-4S] cluster as cofactor. The cofactor is [2Fe-2S] cluster. FMN is required as a cofactor. Ni(2+) serves as cofactor.

The protein resides in the cytoplasm. The catalysed reaction is H2 + NAD(+) = NADH + H(+). This chain is NAD-reducing hydrogenase HoxS subunit delta (hoxY), found in Cupriavidus necator (strain ATCC 17699 / DSM 428 / KCTC 22496 / NCIMB 10442 / H16 / Stanier 337) (Ralstonia eutropha).